Here is a 351-residue protein sequence, read N- to C-terminus: Caveolin-2 (351 aa).

A compositionally biased stretch (polar residues) spans 1–14 (MTRQNTSESDNTQR). 3 disordered regions span residues 1–55 (MTRQ…QGIA), 71–93 (HRTSLNQEVPTPQRRSHPQYDNL), and 144–193 (QKGS…PEME). Residues 1-261 (MTRQNTSESD…FEIVRIYSYK (261 aa)) lie on the Cytoplasmic side of the membrane. Residues 22–31 (TVDDIDELTD) show a composition bias toward acidic residues. Residues 38–51 (HHHHHHHHEHHHQH) are compositionally biased toward basic residues. Residues 167-184 (PAQQSAPPTQQSRPQTTS) are compositionally biased toward low complexity. Residues 262 to 290 (ILTLIFGLIIAFLGGILFALFAFLNIWIF) constitute an intramembrane region (helical). Topologically, residues 291–351 (RPILILTRMA…EVWEKHIHHV (61 aa)) are cytoplasmic.

This sequence belongs to the caveolin family. In terms of assembly, homooligomer. As to expression, expressed in intracellular bodies in intestinal cells.

The protein localises to the golgi apparatus membrane. The protein resides in the cell membrane. It localises to the membrane. It is found in the caveola. Its subcellular location is the apical cell membrane. May act as a scaffolding protein within caveolar membranes. Interacts directly with G-protein alpha subunits and can regulate their activity. Thought to have a role in the uptake of lipids and proteins in the intestinal cells; operates in the apical uptake of lipid markers and trafficking of yolk proteins. Affects fecundity and egg laying. This Caenorhabditis elegans protein is Caveolin-2 (cav-2).